A 435-amino-acid polypeptide reads, in one-letter code: IAA-amino acid hydrolase ILR1-like 5 (435 aa).

An N-terminal signal peptide occupies residues methionine 1–serine 25. Positions 134, 136, 170, 194, and 397 each coordinate Mn(2+). The Prevents secretion from ER signature appears at lysine 432–leucine 435.

The protein belongs to the peptidase M20 family.

Its subcellular location is the endoplasmic reticulum lumen. In terms of biological role, hydrolyzes certain amino acid conjugates of the plant growth regulator indole-3-acetic acid (IAA). This is IAA-amino acid hydrolase ILR1-like 5 from Arabidopsis thaliana (Mouse-ear cress).